Reading from the N-terminus, the 412-residue chain is L-threonine:uridine-5'-aldehyde transaldolase (412 aa).

The residue at position 229 (lysine 229) is an N6-(pyridoxal phosphate)lysine.

It belongs to the SHMT family. Pyridoxal 5'-phosphate is required as a cofactor.

The catalysed reaction is uridine-5'-aldehyde + L-threonine = (5'S,6'S)-C-glycyluridine + acetaldehyde. It participates in antibiotic biosynthesis. Functionally, transaldolase involved in the biosynthesis of the capuramycin-type nucleoside antibiotic A-503083. Catalyzes the condensation of L-threonine and uridine-5'-aldehyde to form 5'-C-glycyluridine (GlyU). Forms (5'S,6'S)-GlyU. This is L-threonine:uridine-5'-aldehyde transaldolase from Streptomyces sp.